An 80-amino-acid polypeptide reads, in one-letter code: UPF0154 protein MGAS10270_Spy0296 (80 aa).

A helical membrane pass occupies residues Ala-4–Ile-24.

The protein belongs to the UPF0154 family.

The protein localises to the cell membrane. The chain is UPF0154 protein MGAS10270_Spy0296 from Streptococcus pyogenes serotype M2 (strain MGAS10270).